We begin with the raw amino-acid sequence, 510 residues long: uncharacterized protein (510 aa).

A signal peptide spans 1-19 (MLILLILYFLFLQLHIFDS). The chain crosses the membrane as a helical span at residues 28–48 (IYIHYAICKFIFLLEIYKLIA).

The protein localises to the host membrane. This is an uncharacterized protein from Sulfolobus islandicus rod-shaped virus 1 (SIRV-1).